The sequence spans 162 residues: NADH-quinone oxidoreductase subunit I (162 aa).

2 consecutive 4Fe-4S ferredoxin-type domains span residues 54-83 (RRYENGEERCIACKLCEAVCPALAITIESE) and 93-122 (TRYDIDLTKCIFCGFCEESCPVDSIVETQI). 8 residues coordinate [4Fe-4S] cluster: Cys63, Cys66, Cys69, Cys73, Cys102, Cys105, Cys108, and Cys112.

The protein belongs to the complex I 23 kDa subunit family. In terms of assembly, NDH-1 is composed of 14 different subunits. Subunits NuoA, H, J, K, L, M, N constitute the membrane sector of the complex. [4Fe-4S] cluster is required as a cofactor.

It localises to the cell inner membrane. The enzyme catalyses a quinone + NADH + 5 H(+)(in) = a quinol + NAD(+) + 4 H(+)(out). Its function is as follows. NDH-1 shuttles electrons from NADH, via FMN and iron-sulfur (Fe-S) centers, to quinones in the respiratory chain. The immediate electron acceptor for the enzyme in this species is believed to be ubiquinone. Couples the redox reaction to proton translocation (for every two electrons transferred, four hydrogen ions are translocated across the cytoplasmic membrane), and thus conserves the redox energy in a proton gradient. This is NADH-quinone oxidoreductase subunit I from Burkholderia cenocepacia (strain ATCC BAA-245 / DSM 16553 / LMG 16656 / NCTC 13227 / J2315 / CF5610) (Burkholderia cepacia (strain J2315)).